We begin with the raw amino-acid sequence, 73 residues long: Small ribosomal subunit protein bS18c (73 aa).

This sequence belongs to the bacterial ribosomal protein bS18 family. In terms of assembly, part of the 30S ribosomal subunit.

The protein resides in the plastid. It localises to the chloroplast. In Rhodomonas salina (Cryptomonas salina), this protein is Small ribosomal subunit protein bS18c.